The primary structure comprises 248 residues: Probable phosphatase VS_II0429 (248 aa).

The Zn(2+) site is built by H8, H10, H16, H41, E74, H102, H132, D194, and H196.

This sequence belongs to the PHP family. Zn(2+) serves as cofactor.

The polypeptide is Probable phosphatase VS_II0429 (Vibrio atlanticus (strain LGP32) (Vibrio splendidus (strain Mel32))).